Consider the following 128-residue polypeptide: Probable soluble cytochrome b562 2 (128 aa).

The N-terminal stretch at 1-22 (MGKTLMALITAALLSTSSLVMA) is a signal peptide. Residues methionine 29 and histidine 124 each coordinate heme b.

Belongs to the cytochrome b562 family. Heme b serves as cofactor.

Its subcellular location is the periplasm. Electron-transport protein of unknown function. This Yersinia pestis protein is Probable soluble cytochrome b562 2 (cybC2).